Reading from the N-terminus, the 226-residue chain is Flagellar L-ring protein (226 aa).

The first 15 residues, 1 to 15 (MKRLAVSILCLALAG), serve as a signal peptide directing secretion. Cys-16 is lipidated: N-palmitoyl cysteine. Residue Cys-16 is the site of S-diacylglycerol cysteine attachment.

Belongs to the FlgH family. In terms of assembly, the basal body constitutes a major portion of the flagellar organelle and consists of four rings (L,P,S, and M) mounted on a central rod.

The protein resides in the cell outer membrane. It localises to the bacterial flagellum basal body. Functionally, assembles around the rod to form the L-ring and probably protects the motor/basal body from shearing forces during rotation. The polypeptide is Flagellar L-ring protein (Geobacter metallireducens (strain ATCC 53774 / DSM 7210 / GS-15)).